We begin with the raw amino-acid sequence, 66 residues long: uncharacterized protein (66 aa).

This is an uncharacterized protein from Homo sapiens (Human).